A 345-amino-acid chain; its full sequence is Probable deoxyhypusine synthase 2 (345 aa).

Catalysis depends on lysine 292, which acts as the Nucleophile.

This sequence belongs to the deoxyhypusine synthase family. NAD(+) serves as cofactor.

It carries out the reaction [eIF5A protein]-L-lysine + spermidine = [eIF5A protein]-deoxyhypusine + propane-1,3-diamine. The protein operates within protein modification; eIF5A hypusination. Its function is as follows. Catalyzes the NAD-dependent oxidative cleavage of spermidine and the subsequent transfer of the butylamine moiety of spermidine to the epsilon-amino group of a specific lysine residue of the eIF-5A precursor protein to form the intermediate deoxyhypusine residue. This chain is Probable deoxyhypusine synthase 2 (dys2), found in Methanosarcina mazei (strain ATCC BAA-159 / DSM 3647 / Goe1 / Go1 / JCM 11833 / OCM 88) (Methanosarcina frisia).